A 132-amino-acid polypeptide reads, in one-letter code: Small ribosomal subunit protein uS8c (132 aa).

The protein belongs to the universal ribosomal protein uS8 family. Part of the 30S ribosomal subunit.

Its subcellular location is the plastid. It is found in the chloroplast. In terms of biological role, one of the primary rRNA binding proteins, it binds directly to 16S rRNA central domain where it helps coordinate assembly of the platform of the 30S subunit. The sequence is that of Small ribosomal subunit protein uS8c (rps8) from Dioscorea elephantipes (Elephant's foot yam).